Reading from the N-terminus, the 330-residue chain is G-protein coupled receptor 74 (330 aa).

The next 7 membrane-spanning stretches (helical) occupy residues 50–70 (LIVV…NLWL), 85–105 (FILI…IFSI), 121–141 (MVVF…LCFD), 160–180 (WVFC…QKAL), 210–230 (VAVS…CIFY), 252–272 (MLLF…LSFI), and 295–315 (LPLL…IYIL). C117 and C195 are joined by a disulfide.

Belongs to the G-protein coupled receptor 1 family.

Its subcellular location is the host membrane. In Equus caballus (Horse), this protein is G-protein coupled receptor 74 (74).